We begin with the raw amino-acid sequence, 1765 residues long: RANBP2-like and GRIP domain-containing protein 5/6 (1765 aa).

A Phosphothreonine modification is found at Thr-19. Ser-21 is subject to Phosphoserine. 3 TPR repeats span residues 26–59, 60–93, and 648–681; these read SMKG…QERD, PKAH…NPTQ, and EDAH…VSYW. Disordered stretches follow at residues 760 to 804 and 924 to 945; these read GPLY…PRWT and FGIS…NDTG. The span at 778–797 shows a compositional bias: low complexity; sequence STPSPTKYSLSPSKSYKYSP. Positions 931 to 941 are enriched in basic and acidic residues; sequence NQEKKREKPLE. The RanBD1 1 domain occupies 1036 to 1172; sequence HFEPVVQMPE…FEECQRLLLD (137 aa). Disordered regions lie at residues 1214–1247 and 1306–1330; these read KVTE…PTLE and AKLN…EERD. Over residues 1235–1244 the composition is skewed to polar residues; sequence IKPNAENTGP. The segment covering 1317-1329 has biased composition (acidic residues); that stretch reads TDEESVVTQEEER. The RanBD1 2 domain occupies 1333–1469; sequence YFEPVVPLPD…FDEAKTAQEK (137 aa). Positions 1580–1593 are enriched in polar residues; sequence NNSETSSVAQSGSE. Residues 1580-1621 form a disordered region; that stretch reads NNSETSSVAQSGSESKVEPKKCELSKNSDIEQSSDSKVKNLS. Residues 1594–1617 show a composition bias toward basic and acidic residues; it reads SKVEPKKCELSKNSDIEQSSDSKV. A GRIP domain is found at 1702–1752; sequence REKSAANLEYLKNVLLQFIFLKPGSERERLLPVINTMLQLSPEEKGKLAAV.

Expressed in testis.

It is found in the cytoplasm. The protein is RANBP2-like and GRIP domain-containing protein 5/6 (RGPD5) of Homo sapiens (Human).